The primary structure comprises 997 residues: Bifunctional purine synthesis protein purC/E (997 aa).

Positions 1–305 (MTTAINNNIV…NNNNNNNNNS (305 aa)) are SAICAR synthetase. 3 stretches are compositionally biased toward low complexity: residues 294–323 (LNNN…SLPN), 342–355 (QQQS…NVNS), and 524–536 (TSTS…TTTS). Disordered regions lie at residues 294-355 (LNNN…NVNS), 518-538 (IPVD…TSNA), 550-569 (INSN…QQQT), and 575-604 (PTII…SSII). The AIR carboxylase stretch occupies residues 305–997 (SNNNNNNTSS…GRKMGHVTQQ (693 aa)). The span at 575-597 (PTIINTPTPVRSSVSRSQSPLPS) shows a compositional bias: low complexity. ATP contacts are provided by residues R728, K768, Q779, 807–810 (EQYI), and E815. Residues 732–927 (KTFIQSLDIP…QFEQLIRCVC (196 aa)) enclose the ATP-grasp domain. Mg(2+) contacts are provided by E880 and E898. Position 897 to 898 (897 to 898 (NE)) interacts with ATP.

In the N-terminal section; belongs to the SAICAR synthetase family. It in the C-terminal section; belongs to the AIR carboxylase family. Class I subfamily. Mg(2+) is required as a cofactor. It depends on Mn(2+) as a cofactor.

It carries out the reaction 5-amino-1-(5-phospho-D-ribosyl)imidazole-4-carboxylate + L-aspartate + ATP = (2S)-2-[5-amino-1-(5-phospho-beta-D-ribosyl)imidazole-4-carboxamido]succinate + ADP + phosphate + 2 H(+). The enzyme catalyses 5-amino-1-(5-phospho-D-ribosyl)imidazole-4-carboxylate + H(+) = 5-amino-1-(5-phospho-beta-D-ribosyl)imidazole + CO2. Its pathway is purine metabolism; IMP biosynthesis via de novo pathway; 5-amino-1-(5-phospho-D-ribosyl)imidazole-4-carboxylate from 5-amino-1-(5-phospho-D-ribosyl)imidazole (carboxylase route): step 1/1. It participates in purine metabolism; IMP biosynthesis via de novo pathway; 5-amino-1-(5-phospho-D-ribosyl)imidazole-4-carboxamide from 5-amino-1-(5-phospho-D-ribosyl)imidazole-4-carboxylate: step 1/2. Functionally, bifunctional enzyme involved in de novo IMP synthesis, an essential step for de nove purine synthesis. This Dictyostelium discoideum (Social amoeba) protein is Bifunctional purine synthesis protein purC/E (purC/E).